Here is a 61-residue protein sequence, read N- to C-terminus: Short neurotoxin 1 (61 aa).

Intrachain disulfides connect cysteine 3/cysteine 23, cysteine 17/cysteine 40, cysteine 42/cysteine 53, and cysteine 54/cysteine 59.

Belongs to the three-finger toxin family. Short-chain subfamily. Type I alpha-neurotoxin sub-subfamily. In terms of tissue distribution, expressed by the venom gland.

Its subcellular location is the secreted. Binds to muscle nicotinic acetylcholine receptor (nAChR) and inhibit acetylcholine from binding to the receptor, thereby impairing neuromuscular transmission. This is Short neurotoxin 1 from Naja samarensis (Peters' cobra).